The following is a 100-amino-acid chain: Large ribosomal subunit protein uL23 (100 aa).

Belongs to the universal ribosomal protein uL23 family. Part of the 50S ribosomal subunit. Contacts protein L29, and trigger factor when it is bound to the ribosome.

Functionally, one of the early assembly proteins it binds 23S rRNA. One of the proteins that surrounds the polypeptide exit tunnel on the outside of the ribosome. Forms the main docking site for trigger factor binding to the ribosome. The sequence is that of Large ribosomal subunit protein uL23 from Aggregatibacter actinomycetemcomitans (Actinobacillus actinomycetemcomitans).